The sequence spans 351 residues: Succinylglutamate desuccinylase (351 aa).

Residues H73, E76, and H168 each coordinate Zn(2+). E231 is a catalytic residue.

It belongs to the AspA/AstE family. Succinylglutamate desuccinylase subfamily. Zn(2+) is required as a cofactor.

It catalyses the reaction N-succinyl-L-glutamate + H2O = L-glutamate + succinate. Its pathway is amino-acid degradation; L-arginine degradation via AST pathway; L-glutamate and succinate from L-arginine: step 5/5. Functionally, transforms N(2)-succinylglutamate into succinate and glutamate. In Burkholderia lata (strain ATCC 17760 / DSM 23089 / LMG 22485 / NCIMB 9086 / R18194 / 383), this protein is Succinylglutamate desuccinylase.